The sequence spans 539 residues: Tripartite motif-containing protein 26 (539 aa).

An RING-type zinc finger spans residues 16 to 57 (CSICLDYLRDPVTIDCGHVFCRSCTTDVRPISGSRPVCPLCK). Residues 97–138 (QDAKLCERHREKLHYYCEDDGKLLCVMCRESREHRPHTAVLM) form a B box-type zinc finger. Positions 102, 105, 124, and 130 each coordinate Zn(2+). Positions 188–227 (IVAEFEQGHQFLREREEHLLEQLAKLEQELTEGREKFKSR) form a coiled coil. One can recognise a B30.2/SPRY domain in the interval 295–539 (RGLREFQGKL…WPGTRLLLRP (245 aa)). The interval 376–437 (REGWSEDEEE…EEEEEVLESC (62 aa)) is disordered. Over residues 380-434 (SEDEEEGDEEEEGEEEEEEEEAGYGDGYDDWETDEDEESLGDEEEEEEEEEEEVL) the composition is skewed to acidic residues.

The protein belongs to the TRIM/RBCC family. Interacts with TBK1; this interaction bridges together TBK1 and NEMO in order to activate TBK1. Interacts with INCA1. In terms of processing, autoubiquitinates upon viral infection. In turn, autoubiquitinated TRIM26 recruits NEMO and bridges TBK1-NEMO interaction.

The protein resides in the cytoplasm. It localises to the nucleus. The enzyme catalyses S-ubiquitinyl-[E2 ubiquitin-conjugating enzyme]-L-cysteine + [acceptor protein]-L-lysine = [E2 ubiquitin-conjugating enzyme]-L-cysteine + N(6)-ubiquitinyl-[acceptor protein]-L-lysine.. Its function is as follows. E3 ubiquitin-protein ligase which regulates the IFN-beta production and antiviral response downstream of various DNA-encoded pattern-recognition receptors (PRRs). Also plays a central role in determining the response to different forms of oxidative stress by controlling levels of DNA glycosylases NEIL1, NEIL3 and NTH1 that are involved in repair of damaged DNA. Promotes nuclear IRF3 ubiquitination and proteasomal degradation. Bridges together TBK1 and NEMO during the innate response to viral infection leading to the activation of TBK1. Positively regulates LPS-mediated inflammatory innate immune response by catalyzing the 'Lys-11'-linked polyubiquitination of TAB1 to enhance its activation and subsequent NF-kappa-B and MAPK signaling. In a manner independent of its catalytic activity, inhibits WWP2, a SOX2-directed E3 ubiquitin ligase, and thus protects SOX2 from polyubiquitination and proteasomal degradation. Ubiquitinates the histone acetyltransferase protein complex component PHF20 and thereby triggers its degradation in the nucleus after its recruitment by the histone demethylase KDM6B, serving as a scaffold protein. Upon induction by TGF-beta, ubiquitinates the TFIID component TAF7 for proteasomal degradation. Induces ferroptosis by ubiquitinating SLC7A11, a critical protein for lipid reactive oxygen species (ROS) scavenging. Inhibits directly hepatitis B virus replication by mediating HBX ubiquitination and subsequent degradation. In terms of biological role, (Microbial infection) Promotes herpes simplex virus type 2/HHV-2 infection in vaginal epithelial cells by decreasing the nuclear localization of IRF3, the primary mediator of type I interferon activation. The protein is Tripartite motif-containing protein 26 (TRIM26) of Homo sapiens (Human).